The sequence spans 435 residues: NADH-quinone oxidoreductase subunit D (435 aa).

This sequence belongs to the complex I 49 kDa subunit family. NDH-1 is composed of 14 different subunits. Subunits NuoB, C, D, E, F, and G constitute the peripheral sector of the complex.

The protein resides in the cell membrane. The catalysed reaction is a quinone + NADH + 5 H(+)(in) = a quinol + NAD(+) + 4 H(+)(out). Its function is as follows. NDH-1 shuttles electrons from NADH, via FMN and iron-sulfur (Fe-S) centers, to quinones in the respiratory chain. The immediate electron acceptor for the enzyme in this species is believed to be ubiquinone. Couples the redox reaction to proton translocation (for every two electrons transferred, four hydrogen ions are translocated across the cytoplasmic membrane), and thus conserves the redox energy in a proton gradient. The polypeptide is NADH-quinone oxidoreductase subunit D (Stenotrophomonas maltophilia (strain K279a)).